The chain runs to 239 residues: Major centromere autoantigen B (239 aa).

A disordered region spans residues 28–185; it reads AGFGGGPNAT…DDEVPVPSFG (158 aa). A phosphothreonine mark is found at T37 and T39. Composition is skewed to acidic residues over residues 46–117 and 148–179; these read GEEE…EAED and GEEDSESDSEEEEEDDDEDEDDEDDEEEDDEV. A homodimerization region spans residues 176–239; the sequence is DDEVPVPSFG…AGARGLGHQS (64 aa).

In terms of assembly, antiparallel homodimer. Interacts with CENPT. Identified in a centromere complex containing histones H2A, H2B and H4, and at least CENPA, CENPB, CENPC, CENPT, CENPN, HJURP, SUPT16H, SSRP1 and RSF1. In terms of processing, poly-ADP-ribosylated by PARP1. N-terminally methylated by METTL11A/NTM1. Alpha-N-methylation is stimulated in response extracellular stimuli, including increased cell density and heat shock, and seems to facilitate binding to CENP-B boxes. Chromatin-bound CENP-B is primarily trimethylated.

Its subcellular location is the nucleus. It localises to the chromosome. The protein resides in the centromere. Interacts with centromeric heterochromatin in chromosomes and binds to a specific 17 bp subset of alphoid satellite DNA, called the CENP-B box. May organize arrays of centromere satellite DNA into a higher-order structure which then directs centromere formation and kinetochore assembly in mammalian chromosomes. The sequence is that of Major centromere autoantigen B (CENPB) from Ovis aries (Sheep).